We begin with the raw amino-acid sequence, 745 residues long: NAD(P)H-quinone oxidoreductase subunit 5, chloroplastic (745 aa).

16 helical membrane passes run 9 to 29 (WIIP…LLLF), 50 to 70 (WAFP…DLSI), 99 to 119 (IDSL…FVLI), 135 to 155 (FAYM…CNLI), 157 to 177 (IYIF…FWFT), 194 to 214 (IGDF…GSFE), 229 to 249 (NEVH…GAVA), 268 to 288 (TPIS…FLVA), 290 to 310 (LFPL…IGII), 337 to 357 (LGYM…FHLI), 364 to 384 (ALLF…VGYS), 406 to 426 (IAFL…CFWS), 435 to 455 (WLYS…TAFY), 550 to 570 (LFPM…AIPF), 610 to 630 (FSVS…KPFY), and 724 to 744 (FYLL…YFIL).

It belongs to the complex I subunit 5 family. As to quaternary structure, NDH is composed of at least 16 different subunits, 5 of which are encoded in the nucleus.

The protein localises to the plastid. It localises to the chloroplast thylakoid membrane. The catalysed reaction is a plastoquinone + NADH + (n+1) H(+)(in) = a plastoquinol + NAD(+) + n H(+)(out). It carries out the reaction a plastoquinone + NADPH + (n+1) H(+)(in) = a plastoquinol + NADP(+) + n H(+)(out). Functionally, NDH shuttles electrons from NAD(P)H:plastoquinone, via FMN and iron-sulfur (Fe-S) centers, to quinones in the photosynthetic chain and possibly in a chloroplast respiratory chain. The immediate electron acceptor for the enzyme in this species is believed to be plastoquinone. Couples the redox reaction to proton translocation, and thus conserves the redox energy in a proton gradient. In Gossypium barbadense (Sea Island cotton), this protein is NAD(P)H-quinone oxidoreductase subunit 5, chloroplastic (ndhF).